A 426-amino-acid polypeptide reads, in one-letter code: Serine--tRNA ligase (426 aa).

Residue 233–235 (TSE) participates in L-serine binding. Residue 264-266 (RAE) participates in ATP binding. Position 287 (E287) interacts with L-serine. 351-354 (EISS) contacts ATP. Position 387 (S387) interacts with L-serine.

It belongs to the class-II aminoacyl-tRNA synthetase family. Type-1 seryl-tRNA synthetase subfamily. In terms of assembly, homodimer. The tRNA molecule binds across the dimer.

The protein localises to the cytoplasm. It catalyses the reaction tRNA(Ser) + L-serine + ATP = L-seryl-tRNA(Ser) + AMP + diphosphate + H(+). It carries out the reaction tRNA(Sec) + L-serine + ATP = L-seryl-tRNA(Sec) + AMP + diphosphate + H(+). The protein operates within aminoacyl-tRNA biosynthesis; selenocysteinyl-tRNA(Sec) biosynthesis; L-seryl-tRNA(Sec) from L-serine and tRNA(Sec): step 1/1. Catalyzes the attachment of serine to tRNA(Ser). Is also able to aminoacylate tRNA(Sec) with serine, to form the misacylated tRNA L-seryl-tRNA(Sec), which will be further converted into selenocysteinyl-tRNA(Sec). This is Serine--tRNA ligase from Xanthomonas euvesicatoria pv. vesicatoria (strain 85-10) (Xanthomonas campestris pv. vesicatoria).